The primary structure comprises 255 residues: Small ribosomal subunit protein uS2 (255 aa).

Residues 226–255 (QGVSNEEVAAEQNIDLDEKEKSEETEATEE) form a disordered region.

This sequence belongs to the universal ribosomal protein uS2 family.

The sequence is that of Small ribosomal subunit protein uS2 from Staphylococcus aureus (strain JH1).